Here is a 258-residue protein sequence, read N- to C-terminus: Electron transfer flavoprotein beta subunit lysine methyltransferase (258 aa).

This sequence belongs to the methyltransferase superfamily. ETFBKMT family.

Its subcellular location is the cytoplasm. The protein resides in the mitochondrion matrix. The enzyme catalyses L-lysyl-[protein] + 3 S-adenosyl-L-methionine = N(6),N(6),N(6)-trimethyl-L-lysyl-[protein] + 3 S-adenosyl-L-homocysteine + 3 H(+). In terms of biological role, protein-lysine methyltransferase that selectively trimethylates the flavoprotein ETFB in mitochondria. Thereby, may negatively regulate the function of ETFB in electron transfer from Acyl-CoA dehydrogenases to the main respiratory chain. The chain is Electron transfer flavoprotein beta subunit lysine methyltransferase from Danio rerio (Zebrafish).